The following is a 136-amino-acid chain: Large-conductance mechanosensitive channel (136 aa).

Helical transmembrane passes span 10 to 30 (FAMR…AAFG) and 76 to 96 (GVFI…FMAI).

Belongs to the MscL family. Homopentamer.

The protein localises to the cell inner membrane. Functionally, channel that opens in response to stretch forces in the membrane lipid bilayer. May participate in the regulation of osmotic pressure changes within the cell. This is Large-conductance mechanosensitive channel from Shigella boydii serotype 18 (strain CDC 3083-94 / BS512).